Consider the following 686-residue polypeptide: Methionine--tRNA ligase (686 aa).

Residues 15–25 carry the 'HIGH' region motif; it reads PYANGSIHLGH. Positions 146, 149, 159, and 162 each coordinate Zn(2+). The 'KMSKS' region signature appears at 332–336; the sequence is KMSKS. Lys-335 contributes to the ATP binding site. One can recognise a tRNA-binding domain in the interval 585-686; the sequence is AFEAVDMRIA…EGAQPGMRVM (102 aa).

It belongs to the class-I aminoacyl-tRNA synthetase family. MetG type 1 subfamily. In terms of assembly, homodimer. Zn(2+) is required as a cofactor.

It localises to the cytoplasm. The catalysed reaction is tRNA(Met) + L-methionine + ATP = L-methionyl-tRNA(Met) + AMP + diphosphate. Its function is as follows. Is required not only for elongation of protein synthesis but also for the initiation of all mRNA translation through initiator tRNA(fMet) aminoacylation. This is Methionine--tRNA ligase from Aliivibrio salmonicida (strain LFI1238) (Vibrio salmonicida (strain LFI1238)).